The chain runs to 231 residues: Large ribosomal subunit protein uL1 (231 aa).

This sequence belongs to the universal ribosomal protein uL1 family. Part of the 50S ribosomal subunit.

Binds directly to 23S rRNA. The L1 stalk is quite mobile in the ribosome, and is involved in E site tRNA release. In terms of biological role, protein L1 is also a translational repressor protein, it controls the translation of the L11 operon by binding to its mRNA. The sequence is that of Large ribosomal subunit protein uL1 from Pseudomonas entomophila (strain L48).